The following is a 20-amino-acid chain: 7.2 kDa cytotoxin RVV-7 (20 aa).

Monomer. Homodimerizes during storage at 30 degrees Celsius (observed after 3 days). As to expression, expressed by the venom gland.

Its subcellular location is the secreted. It is found in the target cell membrane. Its function is as follows. This three-finger cytotoxin shows cytotoxicity and direct nephrotoxicity. The cytotoxicity has been observed on B16F10 melanoma cells (EC(50)=2.56 uM) and on kidney proximal tubular epithelium LLCPK1 cells (EC(50)=4.79 uM); it is due to necrotic cell death and not to apoptosis. Direct nephrotoxicity has been deduced from binding to LLCPK1 cell line and to kidney membranes. In addition, after intravenous injection into mice tail vein, the toxin principally accumulates in kidney, but only minimally in blood, liver and brain. This is 7.2 kDa cytotoxin RVV-7 from Daboia russelii (Russel's viper).